The following is a 631-amino-acid chain: MSATKLTRREQRAQAQHFIDTLEGSAFPNSKRIYITGTHPGVRVPMREIQLSPTLIGGSKEQPQYEENEAIPVYDTSGPYGDPQIAINVQQGLAKLRQPWIDARGDTEELTVRSSDYTKARLADDGLDELRFSGVLTPKRAKAGHRVTQLHYARKGIITPEMEFIAIRENMGRERIRSEVLRHQHPGMSFGARLPENITAEFVRDEVAAGRAIIPANINHPESEPMIIGRNFLVKVNANIGNSAVTSSIEEEVEKLVWSTRWGADTVMDLSTGRYIHETREWILRNSPVPIGTVPIYQALEKVNGIAEDLTWEVFRDTLLEQAEQGVDYFTIHAGVLLRYVPMTAKRLTGIVSRGGSIMAKWCLSHHQENFLYQRFREICEICAAYDVSLSLGDGLRPGSIQDANDEAQFAELHTLGELTKIAWEYDVQVMIEGPGHVPMQMIRRNMTEELEHCHEAPFYTLGPLTTDIAPGYDHFTSGIGAAMIGWFGCAMLCYVTPKEHLGLPNKEDVKQGLITYKIAAHAADLAKGHPGAQIRDNAMSKARFEFRWEDQFNLALDPFTARAYHDETLPQESGKVAHFCSMCGPKFCSMKISQEVRDYAAAQTIEVGMADMSENFRARGGEIYLRKEEA.

Substrate-binding positions include Asn-239, Met-268, Tyr-297, His-333, 353–355, 394–397, and Glu-433; these read SRG and DGLR. His-437 contributes to the Zn(2+) binding site. Residue Tyr-460 coordinates substrate. His-501 is a Zn(2+) binding site. [4Fe-4S] cluster is bound by residues Cys-581, Cys-584, and Cys-589.

This sequence belongs to the ThiC family. In terms of assembly, homodimer. Requires [4Fe-4S] cluster as cofactor.

The catalysed reaction is 5-amino-1-(5-phospho-beta-D-ribosyl)imidazole + S-adenosyl-L-methionine = 4-amino-2-methyl-5-(phosphooxymethyl)pyrimidine + CO + 5'-deoxyadenosine + formate + L-methionine + 3 H(+). It functions in the pathway cofactor biosynthesis; thiamine diphosphate biosynthesis. Its function is as follows. Catalyzes the synthesis of the hydroxymethylpyrimidine phosphate (HMP-P) moiety of thiamine from aminoimidazole ribotide (AIR) in a radical S-adenosyl-L-methionine (SAM)-dependent reaction. In Escherichia coli O45:K1 (strain S88 / ExPEC), this protein is Phosphomethylpyrimidine synthase.